The following is a 240-amino-acid chain: Phosphoribosylaminoimidazole-succinocarboxamide synthase (240 aa).

It belongs to the SAICAR synthetase family.

The catalysed reaction is 5-amino-1-(5-phospho-D-ribosyl)imidazole-4-carboxylate + L-aspartate + ATP = (2S)-2-[5-amino-1-(5-phospho-beta-D-ribosyl)imidazole-4-carboxamido]succinate + ADP + phosphate + 2 H(+). It participates in purine metabolism; IMP biosynthesis via de novo pathway; 5-amino-1-(5-phospho-D-ribosyl)imidazole-4-carboxamide from 5-amino-1-(5-phospho-D-ribosyl)imidazole-4-carboxylate: step 1/2. The sequence is that of Phosphoribosylaminoimidazole-succinocarboxamide synthase from Limosilactobacillus fermentum (strain NBRC 3956 / LMG 18251) (Lactobacillus fermentum).